Here is a 590-residue protein sequence, read N- to C-terminus: Aspartate--tRNA(Asp/Asn) ligase (590 aa).

Residue Glu175 participates in L-aspartate binding. An aspartate region spans residues 199–202; the sequence is QQYK. Residues Arg221 and His450 each coordinate L-aspartate. Residue 221 to 223 coordinates ATP; the sequence is RDE. Glu484 provides a ligand contact to ATP. Residue Arg491 coordinates L-aspartate. 536-539 contacts ATP; sequence GVDR.

This sequence belongs to the class-II aminoacyl-tRNA synthetase family. Type 1 subfamily. In terms of assembly, homodimer.

The protein localises to the cytoplasm. The enzyme catalyses tRNA(Asx) + L-aspartate + ATP = L-aspartyl-tRNA(Asx) + AMP + diphosphate. Aspartyl-tRNA synthetase with relaxed tRNA specificity since it is able to aspartylate not only its cognate tRNA(Asp) but also tRNA(Asn). Reaction proceeds in two steps: L-aspartate is first activated by ATP to form Asp-AMP and then transferred to the acceptor end of tRNA(Asp/Asn). This Rhodopseudomonas palustris (strain BisA53) protein is Aspartate--tRNA(Asp/Asn) ligase.